The primary structure comprises 84 residues: Large ribosomal subunit protein bL28 (84 aa).

This sequence belongs to the bacterial ribosomal protein bL28 family.

In Clostridium perfringens (strain 13 / Type A), this protein is Large ribosomal subunit protein bL28.